A 464-amino-acid chain; its full sequence is MDLKLYDTLTKDKRAFVPLDPRNVRMYVCGPTVYDFAHIGNARPVIVFDVLFRLLRHIYGDSHVTYVRNITDVDDKINDRALRDYPGLPLNEAIRKVTEKTATQFRADVDALGCLQPTVEPRATDFVLPRPDGKTDMVSLIKTLIDRGHAYEANGEVLFDTASMPDYGQLSGRKLEEQQAGARIAVDAHKKHAADFVLWKQSSADEPGWDSPWGRGRPGWHIECSAMSAAYLGETFDIHGGGLDLIFPHHENEIAQSRCAHGTHAMANYWLHNGFLQVEGEKMSKSLGNFVTINELLQDWPGEVVRLNMLKTHYRSPIDWTLKGLEESAKALDDWYATAGDAAGSAPADTVMETLCDDLNTAQTVAALHGLRHQAEKGDAAQRDQLAASLRFLGFFSETKDAWDARKREASGVDAAQVTALIADRTAARARKDWKESDRIRDELAAMGVAIKDSKEGTTWEIAR.

Cys-29 contributes to the Zn(2+) binding site. A 'HIGH' region motif is present at residues 31–41 (PTVYDFAHIGN). Positions 224, 249, and 253 each coordinate Zn(2+). The 'KMSKS' region motif lies at 282–286 (KMSKS). Lys-285 is a binding site for ATP.

The protein belongs to the class-I aminoacyl-tRNA synthetase family. As to quaternary structure, monomer. Zn(2+) is required as a cofactor.

The protein localises to the cytoplasm. The catalysed reaction is tRNA(Cys) + L-cysteine + ATP = L-cysteinyl-tRNA(Cys) + AMP + diphosphate. The polypeptide is Cysteine--tRNA ligase (Afipia carboxidovorans (strain ATCC 49405 / DSM 1227 / KCTC 32145 / OM5) (Oligotropha carboxidovorans)).